The following is a 475-amino-acid chain: UDP-N-acetylmuramate--L-alanine ligase (475 aa).

An ATP-binding site is contributed by 112 to 118 (GTHGKTT).

Belongs to the MurCDEF family.

It localises to the cytoplasm. It carries out the reaction UDP-N-acetyl-alpha-D-muramate + L-alanine + ATP = UDP-N-acetyl-alpha-D-muramoyl-L-alanine + ADP + phosphate + H(+). The protein operates within cell wall biogenesis; peptidoglycan biosynthesis. Its function is as follows. Cell wall formation. This Cupriavidus pinatubonensis (strain JMP 134 / LMG 1197) (Cupriavidus necator (strain JMP 134)) protein is UDP-N-acetylmuramate--L-alanine ligase.